A 623-amino-acid chain; its full sequence is ATP-dependent lipid A-core flippase (623 aa).

Helical transmembrane passes span 66 to 86 (LVLA…LAVI), 103 to 123 (VWFL…CNFF), 190 to 210 (LVVI…TLII), 290 to 310 (LTPL…AVAL), and 317 to 337 (ALTV…FDPI). The ABC transmembrane type-1 domain occupies 67–349 (VLAVLLMAGA…LTNLAGKMQK (283 aa)). Residues 382–618 (VEFRAVSHRF…NGLYASLYNM (237 aa)) form the ABC transporter domain. Residue 416-423 (GRSGSGKT) participates in ATP binding.

The protein belongs to the ABC transporter superfamily. Lipid exporter (TC 3.A.1.106) family. In terms of assembly, homodimer.

It is found in the cell inner membrane. The catalysed reaction is ATP + H2O + lipid A-core oligosaccharideSide 1 = ADP + phosphate + lipid A-core oligosaccharideSide 2.. In terms of biological role, involved in lipopolysaccharide (LPS) biosynthesis. Translocates lipid A-core from the inner to the outer leaflet of the inner membrane. Transmembrane domains (TMD) form a pore in the inner membrane and the ATP-binding domain (NBD) is responsible for energy generation. The protein is ATP-dependent lipid A-core flippase of Bordetella bronchiseptica (strain ATCC BAA-588 / NCTC 13252 / RB50) (Alcaligenes bronchisepticus).